The sequence spans 895 residues: Histone-lysine N-methyltransferase EZ3 (895 aa).

The segment covering 1–13 (MASSSKASDSSSQ) has biased composition (low complexity). 2 disordered regions span residues 1-30 (MASSSKASDSSSQRSKRSDQGTGREAAPAS) and 396-446 (SSVS…PGKR). Residues 396 to 422 (SSVSAEESTTPPSADTSETENASSDMP) show a composition bias toward polar residues. Residues 427 to 436 (RKYKISKRGP) show a composition bias toward basic residues. The 51-residue stretch at 528–578 (TLSCWSALERDLYLKGIEIFGKNSCLIARNLLSGMKTCMEVANYMYNNGAA) folds into the SANT domain. One can recognise a CXC domain in the interval 628 to 732 (AGHPTVRKRI…SLGEPPARGD (105 aa)). Residues 747 to 862 (QRILLGRSDV…ASEELFYDYR (116 aa)) enclose the SET domain. The disordered stretch occupies residues 870–895 (AWARRPEGSKKDEASVSHHRAHKVAR). The segment covering 873–885 (RRPEGSKKDEASV) has biased composition (basic and acidic residues). A compositionally biased stretch (basic residues) spans 886–895 (SHHRAHKVAR).

This sequence belongs to the class V-like SAM-binding methyltransferase superfamily. Histone-lysine methyltransferase family. EZ subfamily. As to expression, widely expressed.

The protein localises to the nucleus. It carries out the reaction L-lysyl(27)-[histone H3] + 3 S-adenosyl-L-methionine = N(6),N(6),N(6)-trimethyl-L-lysyl(27)-[histone H3] + 3 S-adenosyl-L-homocysteine + 3 H(+). Its function is as follows. Polycomb group (PcG) protein. Catalytic subunit of some PcG multiprotein complex, which methylates 'Lys-27' of histone H3, leading to transcriptional repression of the affected target genes. PcG proteins are not required to initiate repression, but to maintain it during later stages of development. The protein is Histone-lysine N-methyltransferase EZ3 (EZ3) of Zea mays (Maize).